A 91-amino-acid polypeptide reads, in one-letter code: UPF0250 protein NMC1112 (91 aa).

It belongs to the UPF0250 family.

The chain is UPF0250 protein NMC1112 from Neisseria meningitidis serogroup C / serotype 2a (strain ATCC 700532 / DSM 15464 / FAM18).